The primary structure comprises 423 residues: 3-phosphoshikimate 1-carboxyvinyltransferase (423 aa).

Lys-21, Ser-22, and Arg-26 together coordinate 3-phosphoshikimate. Lys-21 lines the phosphoenolpyruvate pocket. 2 residues coordinate phosphoenolpyruvate: Gly-92 and Arg-120. 3-phosphoshikimate contacts are provided by Ser-166, Gln-168, Ser-194, Asp-310, and Lys-337. Gln-168 is a binding site for phosphoenolpyruvate. Asp-310 acts as the Proton acceptor in catalysis. Phosphoenolpyruvate is bound by residues Arg-341, Arg-384, and Lys-409.

Belongs to the EPSP synthase family. In terms of assembly, monomer.

The protein resides in the cytoplasm. The enzyme catalyses 3-phosphoshikimate + phosphoenolpyruvate = 5-O-(1-carboxyvinyl)-3-phosphoshikimate + phosphate. The protein operates within metabolic intermediate biosynthesis; chorismate biosynthesis; chorismate from D-erythrose 4-phosphate and phosphoenolpyruvate: step 6/7. Its function is as follows. Catalyzes the transfer of the enolpyruvyl moiety of phosphoenolpyruvate (PEP) to the 5-hydroxyl of shikimate-3-phosphate (S3P) to produce enolpyruvyl shikimate-3-phosphate and inorganic phosphate. The sequence is that of 3-phosphoshikimate 1-carboxyvinyltransferase from Syntrophobacter fumaroxidans (strain DSM 10017 / MPOB).